Here is a 254-residue protein sequence, read N- to C-terminus: Alcohol dehydrogenase (254 aa).

10–33 (FVAGLGGIGLETSREIVKSGPKNL) contributes to the NAD(+) binding site. Ser-138 is a binding site for substrate. The active-site Proton acceptor is the Tyr-151.

This sequence belongs to the short-chain dehydrogenases/reductases (SDR) family. Homodimer.

The enzyme catalyses a primary alcohol + NAD(+) = an aldehyde + NADH + H(+). It carries out the reaction a secondary alcohol + NAD(+) = a ketone + NADH + H(+). This is Alcohol dehydrogenase (Adh) from Scaptomyza crassifemur (Fruit fly).